Reading from the N-terminus, the 397-residue chain is MMLSIVRSVDVVLEIDLAAIRANFQKISTLVGDKVKVAAVVKSDAYGLGLVDIARTLIDAGCDLLFVANLDEALLLRSSFSRVAIAVFRDEFDRFGTWYRSHGLIPVVNNCKELHAVGTAGEPQSYFLNVETGFSRFGLSVGDIQREYLLRTFERYRPSIVLSHLACGECISDPMNQLQRDRFRTVYDLLKPTRGSLSASAGVWLGKSYHFDMVRVGSALYGIHNAGVQTNPLKPVVKLRARILDVRSVPAGEAVGYGATFRTDRASRVAIVGIGYKHGLPWSCANKIFVRLAEYSAPSIGRISMEYMIIDITDVPARRCSPGTFAELLSEDFTVNDLGAAAGVSPQEALTRLGAGCTRKYLNLFPPSAAFTANRPTEAMSNPSRAKSRPMDKQALI.

Lys42 serves as the catalytic Proton acceptor; specific for D-alanine. The residue at position 42 (Lys42) is an N6-(pyridoxal phosphate)lysine. Arg136 serves as a coordination point for substrate. Catalysis depends on Tyr257, which acts as the Proton acceptor; specific for L-alanine. Position 305 (Met305) interacts with substrate. The tract at residues 373 to 397 is disordered; the sequence is ANRPTEAMSNPSRAKSRPMDKQALI.

Belongs to the alanine racemase family. Requires pyridoxal 5'-phosphate as cofactor.

The catalysed reaction is L-alanine = D-alanine. Its pathway is amino-acid biosynthesis; D-alanine biosynthesis; D-alanine from L-alanine: step 1/1. It functions in the pathway cell wall biogenesis; peptidoglycan biosynthesis. Its function is as follows. Catalyzes the interconversion of L-alanine and D-alanine. Provides the D-alanine required for cell wall biosynthesis. The protein is Alanine racemase, biosynthetic (alr) of Mesorhizobium japonicum (strain LMG 29417 / CECT 9101 / MAFF 303099) (Mesorhizobium loti (strain MAFF 303099)).